The chain runs to 287 residues: 4,4'-diapophytoene synthase (287 aa).

(2E,6E)-farnesyl diphosphate is bound by residues 18 to 21, Tyr41, and Arg45; that span reads HSKS. Mg(2+) is bound by residues Asp48 and Asp52. Residue Gln165 coordinates (2E,6E)-farnesyl diphosphate. Asn168 contacts Mg(2+). Arg171 lines the (2E,6E)-farnesyl diphosphate pocket. Residue Asp172 participates in Mg(2+) binding. Tyr248 contributes to the (2E,6E)-farnesyl diphosphate binding site.

This sequence belongs to the phytoene/squalene synthase family. CrtM subfamily. Mg(2+) is required as a cofactor.

The enzyme catalyses 2 (2E,6E)-farnesyl diphosphate = 15-cis-4,4'-diapophytoene + 2 diphosphate. The protein operates within carotenoid biosynthesis; staphyloxanthin biosynthesis; staphyloxanthin from farnesyl diphosphate: step 1/5. Functionally, involved in the biosynthesis of the yellow-orange carotenoid staphyloxanthin, which plays a role in the virulence via its protective function against oxidative stress. Catalyzes the head-to-head condensation of two molecules of farnesyl diphosphate (FPP) into the colorless C(30) carotenoid 4,4'-diapophytoene (dehydrosqualene). The chain is 4,4'-diapophytoene synthase (crtM) from Staphylococcus aureus (strain bovine RF122 / ET3-1).